We begin with the raw amino-acid sequence, 215 residues long: Pyrrolidone-carboxylate peptidase (215 aa).

Residues E81, C144, and H168 contribute to the active site.

The protein belongs to the peptidase C15 family. In terms of assembly, homotetramer.

The protein resides in the cytoplasm. The enzyme catalyses Release of an N-terminal pyroglutamyl group from a polypeptide, the second amino acid generally not being Pro.. Removes 5-oxoproline from various penultimate amino acid residues except L-proline. In Bacillus amyloliquefaciens (Bacillus velezensis), this protein is Pyrrolidone-carboxylate peptidase (pcp).